Here is a 63-residue protein sequence, read N- to C-terminus: ATP synthase membrane subunit K, mitochondrial (63 aa).

The helical transmembrane segment at 15-37 threads the bilayer; it reads TMRGRANVAKATWASLGLVYVLV.

F-type ATPases have 2 components, CF(1) - the catalytic core - and CF(0) - the membrane proton channel. CF(1) has five subunits: alpha(3), beta(3), gamma(1), delta(1), epsilon(1). CF(0) has three main subunits: a, b and c. The ATP synthase complex/complex V exists as a monomeric and a dimeric supercomplex that helps shape mitochondrial cristae to optimize proton flow.

It is found in the mitochondrion membrane. Functionally, mitochondrial membrane ATP synthase (F(1)F(0) ATP synthase or Complex V) produces ATP from ADP in the presence of a proton gradient across the membrane which is generated by electron transport complexes of the respiratory chain. F-type ATPases consist of two structural domains, F(1) - containing the extramembraneous catalytic core and F(0) - containing the membrane proton channel, linked together by a central stalk and a peripheral stalk. During catalysis, ATP synthesis in the catalytic domain of F(1) is coupled via a rotary mechanism of the central stalk subunits to proton translocation. ATP5MK is a minor subunit of the mitochondrial membrane ATP synthase required for dimerization of the ATP synthase complex and as such regulates ATP synthesis in the mitochondria. This Drosophila melanogaster (Fruit fly) protein is ATP synthase membrane subunit K, mitochondrial.